The sequence spans 73 residues: Toxin Td5 (73 aa).

An N-terminal signal peptide occupies residues 1–7 (IGMVVEC). The region spanning 8–70 (KDGYLVGNDG…IWNSATNRCR (63 aa)) is the LCN-type CS-alpha/beta domain. 4 disulfide bridges follow: Cys-18–Cys-69, Cys-22–Cys-44, Cys-30–Cys-50, and Cys-34–Cys-52. Arg-70 bears the Arginine amide mark.

Belongs to the long (4 C-C) scorpion toxin superfamily. Sodium channel inhibitor family. Beta subfamily. In terms of tissue distribution, expressed by the venom gland.

The protein localises to the secreted. Beta toxins bind voltage-independently at site-4 of sodium channels (Nav) and shift the voltage of activation toward more negative potentials thereby affecting sodium channel activation and promoting spontaneous and repetitive firing. This Tityus discrepans (Venezuelan scorpion) protein is Toxin Td5.